A 765-amino-acid polypeptide reads, in one-letter code: MAASQGGGGNSGGGGCGGGGSSGGCGTAGGGGGGAGGGGGGGGGTLVVPIPVPTLFGQPFPNGPPWNPGSLQPQHTVRSLDRALEEAGSSGILSLSGRKLRDFPGSGYDLTDTTQADLSRNRFTEIPSDVWLFAPLETLNLYHNCIKTIPEAIKNLQMLTYLNISRNLLSTLPKYLFDLPLKVLVVSNNKLVSIPEEIGKLKDLMELDISCNEIQVLPQQMGKLHSLRELNIRRNNLHVLPDELGDLPLVKLDFSCNKVTEIPVCYRKLHHLQVIILDNNPLQVPPAQICLKGKVHIFKYLNIQACCRMDKKPDSLDLPSLSKRMPSQPLTDSMEDFYPNKNHGPDSGIGSDNGEKRLSTTEPSDDDTVSLHSQVSESNREQTSRNDSHIIGSKTDSQKDQEVYDFVDPNTEDVAVPEQGNAHIGSFVSFFKGKEKCSEKSRKNEELGDEKRLEKEQLLAEEEDDDLKEVTDLRKIAAQLLQQEQKNRILNHSTSVMRNKPKQTVECEKSVSADEVNSPLSPLTWQPLENQKDQIDEQPWPESHPIIWQSEERRRSKQIRKEYFKYKSMRKSSSGNENDEQDSDNANMSTQSPVSSEEYDRTDGFSHSPFGLKPRSAFSRSSRQEYGAADPGFTMRRKMEHLREEREQIRQLRNNLESRLKVILPDDIGAALMDGVVLCHLANHIRPRSVASIHVPSPAVPKLSMAKCRRNVENFLDACKKLGVSQERLCLPHHILEERGLVKVGVTVQALLELPTTKASQLSVA.

2 disordered regions span residues 1–39 (MAAS…GGGG) and 55–76 (LFGQ…PQHT). LRR repeat units lie at residues 89–110 (SSGI…GYDL), 112–133 (DTTQ…VWLF), 135–156 (PLET…IKNL), 158–179 (MLTY…LFDL), 180–201 (PLKV…IGKL), 203–224 (DLME…MGKL), 226–248 (SLRE…GDLP), 249–269 (LVKL…YRKL), and 271–292 (HLQV…ICLK). The interval 316 to 401 (LDLPSLSKRM…GSKTDSQKDQ (86 aa)) is disordered. The segment covering 378 to 388 (SNREQTSRNDS) has biased composition (basic and acidic residues). Positions 438-472 (SEKSRKNEELGDEKRLEKEQLLAEEEDDDLKEVTD) form a coiled coil. Disordered stretches follow at residues 498 to 552 (RNKP…QSEE) and 565 to 628 (KYKS…EYGA). A compositionally biased stretch (basic and acidic residues) spans 503-512 (QTVECEKSVS). Polar residues-rich tracts occupy residues 518 to 529 (SPLSPLTWQPLE) and 584 to 595 (DNANMSTQSPVS). A Calponin-homology (CH) domain is found at 642 to 755 (LREEREQIRQ…VTVQALLELP (114 aa)).

Functionally, may play a role in the organization of the cytoskeleton. The chain is Leucine-rich repeat and calponin homology domain-containing protein 2 (LRCH2) from Homo sapiens (Human).